Here is a 168-residue protein sequence, read N- to C-terminus: Large ribosomal subunit protein uL10 (168 aa).

Belongs to the universal ribosomal protein uL10 family. As to quaternary structure, part of the ribosomal stalk of the 50S ribosomal subunit. The N-terminus interacts with L11 and the large rRNA to form the base of the stalk. The C-terminus forms an elongated spine to which L12 dimers bind in a sequential fashion forming a multimeric L10(L12)X complex.

In terms of biological role, forms part of the ribosomal stalk, playing a central role in the interaction of the ribosome with GTP-bound translation factors. This is Large ribosomal subunit protein uL10 from Levilactobacillus brevis (strain ATCC 367 / BCRC 12310 / CIP 105137 / JCM 1170 / LMG 11437 / NCIMB 947 / NCTC 947) (Lactobacillus brevis).